Reading from the N-terminus, the 513-residue chain is ATP synthase subunit alpha (513 aa).

169–176 serves as a coordination point for ATP; it reads GDRQTGKT.

Belongs to the ATPase alpha/beta chains family. F-type ATPases have 2 components, CF(1) - the catalytic core - and CF(0) - the membrane proton channel. CF(1) has five subunits: alpha(3), beta(3), gamma(1), delta(1), epsilon(1). CF(0) has three main subunits: a(1), b(2) and c(9-12). The alpha and beta chains form an alternating ring which encloses part of the gamma chain. CF(1) is attached to CF(0) by a central stalk formed by the gamma and epsilon chains, while a peripheral stalk is formed by the delta and b chains.

The protein resides in the cell inner membrane. It carries out the reaction ATP + H2O + 4 H(+)(in) = ADP + phosphate + 5 H(+)(out). In terms of biological role, produces ATP from ADP in the presence of a proton gradient across the membrane. The alpha chain is a regulatory subunit. This Dichelobacter nodosus (strain VCS1703A) protein is ATP synthase subunit alpha.